The chain runs to 220 residues: Peptide methionine sulfoxide reductase MsrA (220 aa).

The active site involves C54.

It belongs to the MsrA Met sulfoxide reductase family.

It catalyses the reaction L-methionyl-[protein] + [thioredoxin]-disulfide + H2O = L-methionyl-(S)-S-oxide-[protein] + [thioredoxin]-dithiol. The enzyme catalyses [thioredoxin]-disulfide + L-methionine + H2O = L-methionine (S)-S-oxide + [thioredoxin]-dithiol. Has an important function as a repair enzyme for proteins that have been inactivated by oxidation. Catalyzes the reversible oxidation-reduction of methionine sulfoxide in proteins to methionine. The polypeptide is Peptide methionine sulfoxide reductase MsrA (Salinispora tropica (strain ATCC BAA-916 / DSM 44818 / JCM 13857 / NBRC 105044 / CNB-440)).